The primary structure comprises 444 residues: MKHFEANFDGLVGPTHNYAGLSFGNVASLSNAALVSNPKAAAKQGLQKAKALADMGIVQGMLAPQERPDLYTLRRIGFSGSDANVLKQAAKEAPILLNACCSASSMWTANAATVSPSADTRDGKLHFTPANLVDKLHRSIEPLTTGRILTATFNDPHYFHHHSHLPEHNSFGDEGAANHTRLCKEYGHAGVELFVYGQEATNPNAPKPQKYPARQTLEASMAVARLHQLEDDNCVFIQQNPDVIDQGVFHNDVIAVGNQNVLFYHEQAFLNTQQKIDEIKRKLDTELYFIEVPTAKVTIQDAVKSYLFNTQIITLASGEMAIIAPTDCQENPAVLAYLNELLTLNTPIKQVLYFDVKQSMQNGGGPACLRLRVAMNEKEITAVNQHTLLNDALFNRLNTWIEKHYRDRLTTQDLADPQLIIESRTALDELSQIMKLGSVYQFQK.

Residues 19 to 28 (AGLSFGNVAS), Asn-110, and 137 to 138 (HR) contribute to the substrate site. Glu-174 is a catalytic residue. Substrate is bound at residue Arg-214. His-250 is an active-site residue. Asp-252 and Asn-362 together coordinate substrate. Cys-368 (nucleophile) is an active-site residue.

The protein belongs to the succinylarginine dihydrolase family. As to quaternary structure, homodimer.

The enzyme catalyses N(2)-succinyl-L-arginine + 2 H2O + 2 H(+) = N(2)-succinyl-L-ornithine + 2 NH4(+) + CO2. It functions in the pathway amino-acid degradation; L-arginine degradation via AST pathway; L-glutamate and succinate from L-arginine: step 2/5. Catalyzes the hydrolysis of N(2)-succinylarginine into N(2)-succinylornithine, ammonia and CO(2). The protein is N-succinylarginine dihydrolase of Shewanella putrefaciens (strain CN-32 / ATCC BAA-453).